A 172-amino-acid chain; its full sequence is Shikimate kinase (172 aa).

11–16 (GAGKST) contributes to the ATP binding site. A Mg(2+)-binding site is contributed by Ser15. Substrate contacts are provided by Asp33, Arg57, and Gly79. Arg117 is a binding site for ATP. Arg136 provides a ligand contact to substrate. An ATP-binding site is contributed by Arg153.

The protein belongs to the shikimate kinase family. In terms of assembly, monomer. It depends on Mg(2+) as a cofactor.

The protein resides in the cytoplasm. The catalysed reaction is shikimate + ATP = 3-phosphoshikimate + ADP + H(+). It functions in the pathway metabolic intermediate biosynthesis; chorismate biosynthesis; chorismate from D-erythrose 4-phosphate and phosphoenolpyruvate: step 5/7. Functionally, catalyzes the specific phosphorylation of the 3-hydroxyl group of shikimic acid using ATP as a cosubstrate. This chain is Shikimate kinase, found in Pseudomonas entomophila (strain L48).